The primary structure comprises 1057 residues: Carbamoyl phosphate synthase large chain (1057 aa).

The tract at residues 1–401 (MPKRDDIQTI…SLLKAIRSLE (401 aa)) is carboxyphosphate synthetic domain. Residues Arg129, Arg169, Gly175, Gly176, Lys208, Ile210, Glu215, Gly241, Ile242, His243, Gln284, and Glu298 each coordinate ATP. The ATP-grasp 1 domain maps to 133–327 (RTLMNDLNVP…IAKLAAKIAV (195 aa)). Positions 284, 298, and 300 each coordinate Mg(2+). Residues Gln284, Glu298, and Asn300 each contribute to the Mn(2+) site. Residues 402–546 (YGVHHLGLPN…YGTYEDENES (145 aa)) are oligomerization domain. Residues 547-929 (IVTDKEKILV…ALYKGLTGSG (383 aa)) form a carbamoyl phosphate synthetic domain region. The ATP-grasp 2 domain occupies 671 to 861 (EALLREISVP…MAQLAMRAIM (191 aa)). ATP-binding residues include Arg707, Arg746, Leu748, Glu752, Gly777, Val778, His779, Ser780, Gln820, and Glu832. Gln820, Glu832, and Asn834 together coordinate Mg(2+). Mn(2+)-binding residues include Gln820, Glu832, and Asn834. The region spanning 930-1057 (FEVKDHGTVL…ESMTFTMRNV (128 aa)) is the MGS-like domain. An allosteric domain region spans residues 930-1057 (FEVKDHGTVL…ESMTFTMRNV (128 aa)).

The protein belongs to the CarB family. In terms of assembly, composed of two chains; the small (or glutamine) chain promotes the hydrolysis of glutamine to ammonia, which is used by the large (or ammonia) chain to synthesize carbamoyl phosphate. Tetramer of heterodimers (alpha,beta)4. Requires Mg(2+) as cofactor. Mn(2+) is required as a cofactor.

It carries out the reaction hydrogencarbonate + L-glutamine + 2 ATP + H2O = carbamoyl phosphate + L-glutamate + 2 ADP + phosphate + 2 H(+). The catalysed reaction is hydrogencarbonate + NH4(+) + 2 ATP = carbamoyl phosphate + 2 ADP + phosphate + 2 H(+). Its pathway is amino-acid biosynthesis; L-arginine biosynthesis; carbamoyl phosphate from bicarbonate: step 1/1. The protein operates within pyrimidine metabolism; UMP biosynthesis via de novo pathway; (S)-dihydroorotate from bicarbonate: step 1/3. Its function is as follows. Large subunit of the glutamine-dependent carbamoyl phosphate synthetase (CPSase). CPSase catalyzes the formation of carbamoyl phosphate from the ammonia moiety of glutamine, carbonate, and phosphate donated by ATP, constituting the first step of 2 biosynthetic pathways, one leading to arginine and/or urea and the other to pyrimidine nucleotides. The large subunit (synthetase) binds the substrates ammonia (free or transferred from glutamine from the small subunit), hydrogencarbonate and ATP and carries out an ATP-coupled ligase reaction, activating hydrogencarbonate by forming carboxy phosphate which reacts with ammonia to form carbamoyl phosphate. The sequence is that of Carbamoyl phosphate synthase large chain from Staphylococcus epidermidis (strain ATCC 35984 / DSM 28319 / BCRC 17069 / CCUG 31568 / BM 3577 / RP62A).